The chain runs to 101 residues: Osteocalcin (101 aa).

An N-terminal signal peptide occupies residues 1-19; the sequence is MKLAILTVLLLGAAVLCLG. The propeptide occupies 20-52; it reads SKDADHSNSVGESHSSEAFISRQESASFARLKR. Residues 53–99 form the Gla domain; the sequence is SYGNNVGQGAAVGSPLESQREVCELNPDCDELADHIGFQEAYRRFYG. Ca(2+)-binding residues include Glu69, Glu73, Glu76, and Asp82. 4-carboxyglutamate occurs at positions 69, 73, and 76. Cys75 and Cys81 are joined by a disulfide.

The protein belongs to the osteocalcin/matrix Gla protein family. Post-translationally, gamma-carboxyglutamate residues are formed by vitamin K dependent carboxylation by GGCX. These residues are essential for the binding of calcium.

It is found in the secreted. The carboxylated form is one of the main organic components of the bone matrix, which constitutes 1-2% of the total bone protein. The carboxylated form binds strongly to apatite and calcium. The protein is Osteocalcin (bglap) of Xenopus laevis (African clawed frog).